A 66-amino-acid polypeptide reads, in one-letter code: Cytochrome b-c1 complex subunit 9, mitochondrial (66 aa).

The Mitochondrial matrix portion of the chain corresponds to 2 to 17 (SFSSLYKTFFKRNAVF). Residues 18-43 (VGTIFAGAFVFQTVFDTAITSWYENH) traverse the membrane as a helical segment. The Mitochondrial intermembrane portion of the chain corresponds to 44–66 (NKGKLWKDVKARIAAGDGDDDDE).

The protein belongs to the UQCR10/QCR9 family. In terms of assembly, component of the ubiquinol-cytochrome c oxidoreductase (cytochrome b-c1 complex, complex III, CIII), a multisubunit enzyme composed of 10 subunits. The complex is composed of 3 respiratory subunits cytochrome b (COB), cytochrome c1 (CYT1) and Rieske protein (RIP1), 2 core protein subunits COR1 and QCR2, and 5 low-molecular weight protein subunits QCR6, QCR7, QCR8, QCR9 and QCR10. The complex exists as an obligatory dimer and forms supercomplexes (SCs) in the inner mitochondrial membrane with a monomer or a dimer of cytochrome c oxidase (complex IV, CIV), resulting in 2 different assemblies (supercomplexes III(2)IV and III(2)IV(2)). Interacts with the transmembrane segment of RIP1.

Its subcellular location is the mitochondrion inner membrane. Functionally, component of the ubiquinol-cytochrome c oxidoreductase, a multisubunit transmembrane complex that is part of the mitochondrial electron transport chain which drives oxidative phosphorylation. The respiratory chain contains 3 multisubunit complexes succinate dehydrogenase (complex II, CII), ubiquinol-cytochrome c oxidoreductase (cytochrome b-c1 complex, complex III, CIII) and cytochrome c oxidase (complex IV, CIV), that cooperate to transfer electrons derived from NADH and succinate to molecular oxygen, creating an electrochemical gradient over the inner membrane that drives transmembrane transport and the ATP synthase. The cytochrome b-c1 complex catalyzes electron transfer from ubiquinol to cytochrome c, linking this redox reaction to translocation of protons across the mitochondrial inner membrane, with protons being carried across the membrane as hydrogens on the quinol. In the process called Q cycle, 2 protons are consumed from the matrix, 4 protons are released into the intermembrane space and 2 electrons are passed to cytochrome c. This Saccharomyces cerevisiae (strain ATCC 204508 / S288c) (Baker's yeast) protein is Cytochrome b-c1 complex subunit 9, mitochondrial (QCR9).